Reading from the N-terminus, the 149-residue chain is NADH-quinone oxidoreductase subunit A (149 aa).

A run of 3 helical transmembrane segments spans residues 16 to 36, 68 to 88, and 98 to 118; these read FAVF…GAFF, FYLV…LYAW, and LGFI…FYLV.

The protein belongs to the complex I subunit 3 family. As to quaternary structure, NDH-1 is composed of 13 different subunits. Subunits NuoA, H, J, K, L, M, N constitute the membrane sector of the complex.

It is found in the cell inner membrane. It carries out the reaction a quinone + NADH + 5 H(+)(in) = a quinol + NAD(+) + 4 H(+)(out). NDH-1 shuttles electrons from NADH, via FMN and iron-sulfur (Fe-S) centers, to quinones in the respiratory chain. The immediate electron acceptor for the enzyme in this species is believed to be ubiquinone. Couples the redox reaction to proton translocation (for every two electrons transferred, four hydrogen ions are translocated across the cytoplasmic membrane), and thus conserves the redox energy in a proton gradient. This Photorhabdus laumondii subsp. laumondii (strain DSM 15139 / CIP 105565 / TT01) (Photorhabdus luminescens subsp. laumondii) protein is NADH-quinone oxidoreductase subunit A.